Reading from the N-terminus, the 60-residue chain is UPF0434 protein Dtpsy_1553 (60 aa).

Belongs to the UPF0434 family.

This chain is UPF0434 protein Dtpsy_1553, found in Acidovorax ebreus (strain TPSY) (Diaphorobacter sp. (strain TPSY)).